A 1090-amino-acid polypeptide reads, in one-letter code: Leucine--tRNA ligase, cytoplasmic (1090 aa).

Ser-2 is subject to N-acetylserine. The 'HIGH' region signature appears at 66–76 (PYMNGVMHAGH). Phosphothreonine is present on Thr-142. The short motif at 729 to 733 (KMSKS) is the 'KMSKS' region element. Lys-732 contributes to the ATP binding site.

It belongs to the class-I aminoacyl-tRNA synthetase family.

It localises to the cytoplasm. It carries out the reaction tRNA(Leu) + L-leucine + ATP = L-leucyl-tRNA(Leu) + AMP + diphosphate. The polypeptide is Leucine--tRNA ligase, cytoplasmic (CDC60) (Saccharomyces cerevisiae (strain ATCC 204508 / S288c) (Baker's yeast)).